Here is a 396-residue protein sequence, read N- to C-terminus: CCA-adding enzyme (396 aa).

Positions 27 and 30 each coordinate ATP. Gly-27 and Arg-30 together coordinate CTP. The Mg(2+) site is built by Asp-40 and Asp-42. ATP contacts are provided by Arg-111, Asp-154, Arg-157, Arg-160, and Arg-163. Residues Arg-111, Asp-154, Arg-157, Arg-160, and Arg-163 each contribute to the CTP site.

This sequence belongs to the tRNA nucleotidyltransferase/poly(A) polymerase family. Bacterial CCA-adding enzyme type 3 subfamily. Homodimer. The cofactor is Mg(2+).

It carries out the reaction a tRNA precursor + 2 CTP + ATP = a tRNA with a 3' CCA end + 3 diphosphate. The catalysed reaction is a tRNA with a 3' CCA end + 2 CTP + ATP = a tRNA with a 3' CCACCA end + 3 diphosphate. Its function is as follows. Catalyzes the addition and repair of the essential 3'-terminal CCA sequence in tRNAs without using a nucleic acid template. Adds these three nucleotides in the order of C, C, and A to the tRNA nucleotide-73, using CTP and ATP as substrates and producing inorganic pyrophosphate. tRNA 3'-terminal CCA addition is required both for tRNA processing and repair. Also involved in tRNA surveillance by mediating tandem CCA addition to generate a CCACCA at the 3' terminus of unstable tRNAs. While stable tRNAs receive only 3'-terminal CCA, unstable tRNAs are marked with CCACCA and rapidly degraded. The polypeptide is CCA-adding enzyme (Bacillus velezensis (strain DSM 23117 / BGSC 10A6 / LMG 26770 / FZB42) (Bacillus amyloliquefaciens subsp. plantarum)).